A 513-amino-acid chain; its full sequence is 2-isopropylmalate synthase (513 aa).

The 264-residue stretch at 5–268 (LIIFDTTLRD…DIGVDTTQIV (264 aa)) folds into the Pyruvate carboxyltransferase domain. Residues aspartate 14, histidine 202, histidine 204, and asparagine 239 each contribute to the Mn(2+) site. A regulatory domain region spans residues 394 to 513 (RFISLSQRSE…KAVQKINPQI (120 aa)).

The protein belongs to the alpha-IPM synthase/homocitrate synthase family. LeuA type 1 subfamily. In terms of assembly, homodimer. Requires Mn(2+) as cofactor.

Its subcellular location is the cytoplasm. The enzyme catalyses 3-methyl-2-oxobutanoate + acetyl-CoA + H2O = (2S)-2-isopropylmalate + CoA + H(+). It participates in amino-acid biosynthesis; L-leucine biosynthesis; L-leucine from 3-methyl-2-oxobutanoate: step 1/4. Functionally, catalyzes the condensation of the acetyl group of acetyl-CoA with 3-methyl-2-oxobutanoate (2-ketoisovalerate) to form 3-carboxy-3-hydroxy-4-methylpentanoate (2-isopropylmalate). The protein is 2-isopropylmalate synthase of Cupriavidus necator (strain ATCC 17699 / DSM 428 / KCTC 22496 / NCIMB 10442 / H16 / Stanier 337) (Ralstonia eutropha).